Consider the following 245-residue polypeptide: tRNA (guanine-N(1)-)-methyltransferase (245 aa).

Gly114 provides a ligand contact to S-adenosyl-L-methionine.

This sequence belongs to the RNA methyltransferase TrmD family. Homodimer.

The protein localises to the cytoplasm. It catalyses the reaction guanosine(37) in tRNA + S-adenosyl-L-methionine = N(1)-methylguanosine(37) in tRNA + S-adenosyl-L-homocysteine + H(+). Functionally, specifically methylates guanosine-37 in various tRNAs. This Sphingopyxis alaskensis (strain DSM 13593 / LMG 18877 / RB2256) (Sphingomonas alaskensis) protein is tRNA (guanine-N(1)-)-methyltransferase.